Consider the following 115-residue polypeptide: Holo-[acyl-carrier-protein] synthase (115 aa).

Mg(2+) contacts are provided by D8 and E50.

The protein belongs to the P-Pant transferase superfamily. AcpS family. Requires Mg(2+) as cofactor.

The protein localises to the cytoplasm. It carries out the reaction apo-[ACP] + CoA = holo-[ACP] + adenosine 3',5'-bisphosphate + H(+). In terms of biological role, transfers the 4'-phosphopantetheine moiety from coenzyme A to a Ser of acyl-carrier-protein. The protein is Holo-[acyl-carrier-protein] synthase of Pseudarthrobacter chlorophenolicus (strain ATCC 700700 / DSM 12829 / CIP 107037 / JCM 12360 / KCTC 9906 / NCIMB 13794 / A6) (Arthrobacter chlorophenolicus).